The sequence spans 392 residues: Phosphoglycerate kinase (392 aa).

Substrate-binding positions include 21–23 (DFN), Arg36, 59–62 (HLGR), Arg113, and Arg146. Residues Lys197, Glu319, and 345 to 348 (GGDT) contribute to the ATP site.

The protein belongs to the phosphoglycerate kinase family. In terms of assembly, monomer.

It localises to the cytoplasm. The enzyme catalyses (2R)-3-phosphoglycerate + ATP = (2R)-3-phospho-glyceroyl phosphate + ADP. It participates in carbohydrate degradation; glycolysis; pyruvate from D-glyceraldehyde 3-phosphate: step 2/5. The protein is Phosphoglycerate kinase of Francisella philomiragia subsp. philomiragia (strain ATCC 25017 / CCUG 19701 / FSC 153 / O#319-036).